A 49-amino-acid chain; its full sequence is Large ribosomal subunit protein bL33A (49 aa).

Belongs to the bacterial ribosomal protein bL33 family.

This Geobacillus thermodenitrificans (strain NG80-2) protein is Large ribosomal subunit protein bL33A.